Here is a 320-residue protein sequence, read N- to C-terminus: MGGMNDLSSTPAPEGDRPARQRKPDWIRVKAPVSKGYHETRKLMRELNLNTVCEEAACPNIGECWTKKHATVMILGDVCTRACAFCNVKTGMPRIVDPMEPENTAIAAAKMGLQHIVITSVDRDDLPDGGAGQFVKVIEALRRETPDTTIEILTPDFRGKMRAAVEAICEAGPDVYNHNLETVPRLYPTIRPGARYYASLRLLEEVKSHDPMIFTKSGIMLGLGEQRLEVHQVMDDMRSADVDFITMGQYLQPTPKHAKVEDFVTPKAFDAFGAIARAKGFLQVASSPLTRSSYHAGDDFAEMRAAREAKLAKERERAQG.

Positions 1-11 (MGGMNDLSSTP) are enriched in polar residues. The disordered stretch occupies residues 1–24 (MGGMNDLSSTPAPEGDRPARQRKP). The segment covering 14-24 (EGDRPARQRKP) has biased composition (basic and acidic residues). The [4Fe-4S] cluster site is built by Cys-53, Cys-58, Cys-64, Cys-79, Cys-83, Cys-86, and Ser-293. Residues 65–282 (WTKKHATVMI…GAIARAKGFL (218 aa)) form the Radical SAM core domain.

This sequence belongs to the radical SAM superfamily. Lipoyl synthase family. Requires [4Fe-4S] cluster as cofactor.

The protein localises to the cytoplasm. The enzyme catalyses [[Fe-S] cluster scaffold protein carrying a second [4Fe-4S](2+) cluster] + N(6)-octanoyl-L-lysyl-[protein] + 2 oxidized [2Fe-2S]-[ferredoxin] + 2 S-adenosyl-L-methionine + 4 H(+) = [[Fe-S] cluster scaffold protein] + N(6)-[(R)-dihydrolipoyl]-L-lysyl-[protein] + 4 Fe(3+) + 2 hydrogen sulfide + 2 5'-deoxyadenosine + 2 L-methionine + 2 reduced [2Fe-2S]-[ferredoxin]. The protein operates within protein modification; protein lipoylation via endogenous pathway; protein N(6)-(lipoyl)lysine from octanoyl-[acyl-carrier-protein]: step 2/2. Catalyzes the radical-mediated insertion of two sulfur atoms into the C-6 and C-8 positions of the octanoyl moiety bound to the lipoyl domains of lipoate-dependent enzymes, thereby converting the octanoylated domains into lipoylated derivatives. The protein is Lipoyl synthase of Erythrobacter litoralis (strain HTCC2594).